The following is a 378-amino-acid chain: Transmembrane protein adipocyte-associated 1 homolog (378 aa).

N-linked (GlcNAc...) asparagine glycans are attached at residues Asn16, Asn25, and Asn36. A run of 7 helical transmembrane segments spans residues 61-81, 88-108, 136-156, 164-184, 205-225, 247-267, and 278-298; these read VMLL…LPSA, TSSP…AVGI, FFLL…GHLE, VLAI…TLEI, HFWL…VILP, ILAL…ADII, and FLYF…GFFG. The disordered stretch occupies residues 316 to 335; sequence DSDVHLPHTSSSGLGRKDLD.

This sequence belongs to the UPF0359 family.

Its subcellular location is the membrane. The polypeptide is Transmembrane protein adipocyte-associated 1 homolog (tpra1) (Danio rerio (Zebrafish)).